The primary structure comprises 239 residues: Cysteine-rich venom protein (239 aa).

The first 18 residues, 1 to 18 (MIVFILLSLAAVLQQSVA), serve as a signal peptide directing secretion. An SCP domain is found at 37-165 (VDMHNSFRRS…PYNYFYVCQY (129 aa)). Cystine bridges form between C74/C152, C91/C166, C147/C163, C185/C192, C188/C197, C210/C228, and C219/C232. The 34-residue stretch at 201–234 (CPINNVFTNCDSLLQQSSCEDSYITTNCGASCFC) folds into the ShKT domain.

It belongs to the CRISP family. As to expression, expressed by the venom gland.

The protein resides in the secreted. Functionally, blocks contraction of smooth muscle elicited by high potassium-induced depolarization, but does not block caffeine-stimulated contraction. May target voltage-gated calcium channels on smooth muscle. The protein is Cysteine-rich venom protein of Cerberus rynchops (Dog-faced water snake).